The chain runs to 356 residues: Ion-translocating oxidoreductase complex subunit D (356 aa).

Helical transmembrane passes span 20 to 40 (LMLL…WFFG), 42 to 62 (GVLV…ALAI), 68 to 88 (PVGF…IGVS), and 117 to 137 (GFNP…SFPV). At T177 the chain carries FMN phosphoryl threonine. Transmembrane regions (helical) follow at residues 205–225 (WASA…LYLL), 229–249 (VYTW…AALF), 259–279 (GSPL…FIVT), 292–312 (VIYG…GSSY), and 315–335 (GVAF…YYTT).

The protein belongs to the NqrB/RnfD family. As to quaternary structure, the complex is composed of six subunits: RnfA, RnfB, RnfC, RnfD, RnfE and RnfG. FMN serves as cofactor.

Its subcellular location is the cell inner membrane. Its function is as follows. Part of a membrane-bound complex that couples electron transfer with translocation of ions across the membrane. The chain is Ion-translocating oxidoreductase complex subunit D from Cellvibrio japonicus (strain Ueda107) (Pseudomonas fluorescens subsp. cellulosa).